We begin with the raw amino-acid sequence, 60 residues long: Large ribosomal subunit protein uL30 (60 aa).

This sequence belongs to the universal ribosomal protein uL30 family. In terms of assembly, part of the 50S ribosomal subunit.

This chain is Large ribosomal subunit protein uL30, found in Oceanobacillus iheyensis (strain DSM 14371 / CIP 107618 / JCM 11309 / KCTC 3954 / HTE831).